We begin with the raw amino-acid sequence, 545 residues long: Serine/threonine-protein kinase PAK 1 (545 aa).

The disordered stretch occupies residues 1-77; the sequence is MSNNGLDIQD…KEKERPEISL (77 aa). Ser2 bears the N-acetylserine mark. Ser21 bears the Phosphoserine; by PKB and autocatalysis mark. Ser57 is subject to Phosphoserine; by autocatalysis. Positions 68–77 are enriched in basic and acidic residues; the sequence is KEKERPEISL. The autoregulatory region stretch occupies residues 70-140; sequence KERPEISLPS…YNSKKTSNSQ (71 aa). Residues 75–88 form the CRIB domain; sequence ISLPSDFEHTIHVG. The tract at residues 75–105 is GTPase-binding; that stretch reads ISLPSDFEHTIHVGFDAVTGEFTGMPEQWAR. Thr84 bears the Phosphothreonine; by OXSR1 mark. Ser115 carries the post-translational modification Phosphoserine. Phosphotyrosine occurs at positions 131 and 142. Phosphoserine; by autocatalysis is present on Ser144. Ser149 carries the phosphoserine modification. Residue Tyr153 is modified to Phosphotyrosine; by JAK2. Positions 159–198 are disordered; it reads LNVKAVSETPAVPPVSEDEDDDDDDATPPPVIAPRPEHTK. Ser174 carries the phosphoserine modification. Over residues 174–184 the composition is skewed to acidic residues; it reads SEDEDDDDDDA. Phosphothreonine is present on Thr185. Ser199 is subject to Phosphoserine; by autocatalysis. The residue at position 201 (Tyr201) is a Phosphotyrosine; by JAK2. At Ser204 the chain carries Phosphoserine. A disordered region spans residues 211–251; sequence VTPTRDVATSPISPTENNTTPPDALTRNTEKQKKKPKMSDE. Residues Thr212 and Thr219 each carry the phosphothreonine modification. A phosphoserine mark is found at Ser220 and Ser223. Residues 220 to 231 are compositionally biased toward polar residues; that stretch reads SPISPTENNTTP. Phosphothreonine is present on residues Thr225, Thr229, and Thr230. Positions 270 to 521 constitute a Protein kinase domain; it reads YTRFEKIGQG…AKELLQHQFL (252 aa). 276–284 contributes to the ATP binding site; sequence IGQGASGTV. Tyr285 is subject to Phosphotyrosine; by JAK2. ATP-binding positions include Lys299 and 345 to 347; that span reads EYL. The Proton acceptor role is filled by Asp389. Thr423 is modified (phosphothreonine; by autocatalysis, BRSK2 and PDPK1).

This sequence belongs to the protein kinase superfamily. STE Ser/Thr protein kinase family. STE20 subfamily. As to quaternary structure, homodimer; homodimerization results in autoinhibition. Active as monomer. Interacts with GIT1. Component of cytoplasmic complexes, which also contains PXN, ARHGEF7 and GIT1. Interacts with NISCH. Interacts with DVL1; mediates the formation of a DVL1, MUSK and PAK1 ternary complex involved in AChR clustering. Binds to the caspase-cleaved p110 isoform of CDC2L1 and CDC2L2, p110C, but not the full-length proteins. Interacts with ARHGEF7. Interacts tightly with GTP-bound but not GDP-bound CDC42/P21 and RAC1. Interacts with SCRIB. Interacts with PDPK1. Interacts (via kinase domain) with RAF1. Interacts with NCK1 and NCK2. Interacts with TBCB. Interacts with BRSK2. Interacts with SNAI1. Interacts with CIB1 isoform 2. Interacts with CIB1 (via N-terminal region); the interaction is direct, promotes PAK1 activity and occurs in a calcium-dependent manner. Interacts with INPP5K. Interacts with gamma-tubulin. Interacts with RHOU; the interaction promotes PAK1 activation. It depends on Mg(2+) as a cofactor. Autophosphorylated in trans, meaning that in a dimer, one kinase molecule phosphorylates the other one. Activated by autophosphorylation at Thr-423 in response to a conformation change, triggered by interaction with GTP-bound CDC42 or RAC1. Activated by phosphorylation at Thr-423 by BRSK2 and by PDPK1. Phosphorylated by JAK2 in response to PRL; this increases PAK1 kinase activity. Phosphorylated at Ser-21 by PKB/AKT; this reduces interaction with NCK1 and association with focal adhesion sites. Upon DNA damage, phosphorylated at Thr-212 and translocates to the nucleoplasm. Phosphorylated at tyrosine residues, which can be enhanced by NTN1. As to expression, overexpressed in gastric cancer cells and tissues (at protein level).

Its subcellular location is the cytoplasm. It localises to the cell junction. The protein localises to the focal adhesion. The protein resides in the cell projection. It is found in the lamellipodium. Its subcellular location is the cell membrane. It localises to the ruffle membrane. The protein localises to the invadopodium. The protein resides in the nucleus. It is found in the nucleoplasm. Its subcellular location is the chromosome. It localises to the cytoskeleton. The protein localises to the microtubule organizing center. The protein resides in the centrosome. It carries out the reaction L-seryl-[protein] + ATP = O-phospho-L-seryl-[protein] + ADP + H(+). It catalyses the reaction L-threonyl-[protein] + ATP = O-phospho-L-threonyl-[protein] + ADP + H(+). Its activity is regulated as follows. Activated by binding small G proteins. Binding of GTP-bound CDC42 or RAC1 to the autoregulatory region releases monomers from the autoinhibited dimer, and enables activation by phosphorylation of Thr-423. Phosphorylation of Thr-84 by OXSR1 inhibits activation. Functionally, protein kinase involved in intracellular signaling pathways downstream of integrins and receptor-type kinases that plays an important role in cytoskeleton dynamics, in cell adhesion, migration, proliferation, apoptosis, mitosis, and in vesicle-mediated transport processes. Can directly phosphorylate BAD and protects cells against apoptosis. Activated by interaction with CDC42 and RAC1. Functions as a GTPase effector that links the Rho-related GTPases CDC42 and RAC1 to the JNK MAP kinase pathway. Phosphorylates and activates MAP2K1, and thereby mediates activation of downstream MAP kinases. Involved in the reorganization of the actin cytoskeleton, actin stress fibers and of focal adhesion complexes. Phosphorylates the tubulin chaperone TBCB and thereby plays a role in the regulation of microtubule biogenesis and organization of the tubulin cytoskeleton. Plays a role in the regulation of insulin secretion in response to elevated glucose levels. Part of a ternary complex that contains PAK1, DVL1 and MUSK that is important for MUSK-dependent regulation of AChR clustering during the formation of the neuromuscular junction (NMJ). Activity is inhibited in cells undergoing apoptosis, potentially due to binding of CDC2L1 and CDC2L2. Phosphorylates MYL9/MLC2. Phosphorylates RAF1 at 'Ser-338' and 'Ser-339' resulting in: activation of RAF1, stimulation of RAF1 translocation to mitochondria, phosphorylation of BAD by RAF1, and RAF1 binding to BCL2. Phosphorylates SNAI1 at 'Ser-246' promoting its transcriptional repressor activity by increasing its accumulation in the nucleus. In podocytes, promotes NR3C2 nuclear localization. Required for atypical chemokine receptor ACKR2-induced phosphorylation of LIMK1 and cofilin (CFL1) and for the up-regulation of ACKR2 from endosomal compartment to cell membrane, increasing its efficiency in chemokine uptake and degradation. In synapses, seems to mediate the regulation of F-actin cluster formation performed by SHANK3, maybe through CFL1 phosphorylation and inactivation. Plays a role in RUFY3-mediated facilitating gastric cancer cells migration and invasion. In response to DNA damage, phosphorylates MORC2 which activates its ATPase activity and facilitates chromatin remodeling. In neurons, plays a crucial role in regulating GABA(A) receptor synaptic stability and hence GABAergic inhibitory synaptic transmission through its role in F-actin stabilization. In hippocampal neurons, necessary for the formation of dendritic spines and excitatory synapses; this function is dependent on kinase activity and may be exerted by the regulation of actomyosin contractility through the phosphorylation of myosin II regulatory light chain (MLC). Along with GIT1, positively regulates microtubule nucleation during interphase. Phosphorylates FXR1, promoting its localization to stress granules and activity. Phosphorylates ILK on 'Thr-173' and 'Ser-246', promoting nuclear export of ILK. This chain is Serine/threonine-protein kinase PAK 1, found in Homo sapiens (Human).